Reading from the N-terminus, the 252-residue chain is Mediator of RNA polymerase II transcription subunit 4 (252 aa).

Coiled coils occupy residues 5 to 31 (KKST…ETLA) and 70 to 112 (KTHQ…QAKE). The segment at 213 to 252 (MLPPNHSNEFLMESLGPNKENEEDVEVMSTDSSSSSSDSD) is disordered. The span at 241–252 (STDSSSSSSDSD) shows a compositional bias: low complexity.

It belongs to the Mediator complex subunit 4 family. In terms of assembly, component of the Mediator complex.

The protein resides in the nucleus. In terms of biological role, component of the Mediator complex, a coactivator involved in the regulated transcription of nearly all RNA polymerase II-dependent genes. Mediator functions as a bridge to convey information from gene-specific regulatory proteins to the basal RNA polymerase II transcription machinery. Mediator is recruited to promoters by direct interactions with regulatory proteins and serves as a scaffold for the assembly of a functional preinitiation complex with RNA polymerase II and the general transcription factors. The sequence is that of Mediator of RNA polymerase II transcription subunit 4 (med4) from Xenopus laevis (African clawed frog).